Reading from the N-terminus, the 290-residue chain is 33 kDa chaperonin (290 aa).

Intrachain disulfides connect Cys235–Cys237 and Cys268–Cys271.

It belongs to the HSP33 family. Post-translationally, under oxidizing conditions two disulfide bonds are formed involving the reactive cysteines. Under reducing conditions zinc is bound to the reactive cysteines and the protein is inactive.

The protein localises to the cytoplasm. Redox regulated molecular chaperone. Protects both thermally unfolding and oxidatively damaged proteins from irreversible aggregation. Plays an important role in the bacterial defense system toward oxidative stress. The chain is 33 kDa chaperonin from Streptococcus pyogenes serotype M6 (strain ATCC BAA-946 / MGAS10394).